The chain runs to 284 residues: Steroidogenic acute regulatory protein, mitochondrial (284 aa).

The N-terminal 62 residues, 1-62 (MFLATFKLCA…RRSSLLGSQL (62 aa)), are a transit peptide targeting the mitochondrion. A phosphoserine; by PKA mark is found at serine 56 and serine 194. In terms of domain architecture, START spans 66–279 (LYSDQELSYI…LRKRLEASPA (214 aa)).

As to quaternary structure, may interact with TSPO. As to expression, expressed within glia and neurons in discrete regions of the brain.

It is found in the mitochondrion. It catalyses the reaction cholesterol(in) = cholesterol(out). The protein operates within steroid metabolism; cholesterol metabolism. Its function is as follows. Plays a key role in steroid hormone synthesis by enhancing the metabolism of cholesterol into pregnenolone. Transporter that binds to and transport cholesterol through the intermembrane space of the mitochondrion. This chain is Steroidogenic acute regulatory protein, mitochondrial (Star), found in Mus musculus (Mouse).